The sequence spans 466 residues: Aladin (466 aa).

WD repeat units lie at residues 135 to 174 (WLNS…TTAT), 179 to 218 (PSQT…HLGR), 229 to 269 (PNNL…MQPL), 271 to 310 (RLGP…TTER), and 378 to 418 (LVGG…FDLQ).

Its subcellular location is the nucleus. The protein resides in the nuclear pore complex. It localises to the cytoplasm. The protein localises to the cytoskeleton. It is found in the spindle. Functionally, involved in mitotic spindle assembly. The protein is Aladin of Drosophila melanogaster (Fruit fly).